The chain runs to 473 residues: SHC-transforming protein 1 (473 aa).

The interval 1–26 (MNKLSGGGGRRTRVEGGQLGGEEWTR) is disordered. At Ser-29 the chain carries Phosphoserine. An N6-acetyllysine modification is found at Lys-44. The PID domain occupies 46 to 229 (MGPGVSYLVR…AGFDGSAWDE (184 aa)). The tract at residues 216–314 (HDRMAGFDGS…PSSGRELFDD (99 aa)) is disordered. The interval 230–377 (EEEEPPDHQY…AMAEQLRGEP (148 aa)) is CH1. A phosphotyrosine mark is found at Tyr-239, Tyr-240, and Tyr-317. Positions 328–348 (QAGAGAGPPNPTINGSAPRDL) are disordered. At Ser-343 the chain carries Phosphoserine. One can recognise an SH2 domain in the interval 378–469 (WFHGKLSRRE…GSELCLQQPV (92 aa)).

Interacts with CPNE3; this interaction may mediate the binding of CPNE3 with ERBB2. Interacts with the Trk receptors NTRK1, NTRK2 and NTRK3; in a phosphotyrosine-dependent manner. Interacts with the NPXY motif of tyrosine-phosphorylated IGF1R and INSR in vitro via the PID domain. Once activated, binds to GRB2. Interacts with tyrosine-phosphorylated CD3T and DDR2. Interacts with the N-terminal region of APS. Interacts with phosphorylated LRP1 and IRS4. Interacts with INPP5D/SHIP1 and INPPL1/SHIP2. Interacts with ALK, GAB2, GRB7 and KIT. Interacts with PTPN6/SHP (tyrosine phosphorylated). Identified in a complex containing FGFR4, NCAM1, CDH2, PLCG1, FRS2, SRC, SHC1, GAP43 and CTTN. Interacts with FLT4 (tyrosine-phosphorylated). Interacts with EPHB1 and GRB2; activates the MAPK/ERK cascade to regulate cell migration. Interacts with PDGFRB (tyrosine-phosphorylated). Interacts with ERBB4. Interacts with TEK/TIE2 (tyrosine-phosphorylated). Interacts with PTK2/FAK1. Interacts with CEACAM1; this interaction is CEACAM1-phosphorylation-dependent and mediates interaction with EGFR or INSR resulting in decrease coupling of SHC1 to the MAPK3/ERK1-MAPK1/ERK2 pathway. Interacts (via PID domain) with PEAK1 (when phosphorylated). Found in a complex with PPP1CA, PPP1CC, SHC1 and PEAK1. Post-translationally, phosphorylated by activated epidermal growth factor receptor. Phosphorylated in response to KIT signaling. Tyrosine phosphorylated in response to FLT3 and FLT4 signaling and by ligand-activated ALK. Tyrosine phosphorylated by ligand-activated PDGFRB. Tyrosine phosphorylated by TEK/TIE2. May be tyrosine phosphorylated by activated PTK2/FAK1. Tyrosine phosphorylated by activated PTK2B/PYK2. Dephosphorylation by PTPN2 may regulate interaction with GRB2.

The protein localises to the cytoplasm. The protein resides in the cell junction. It localises to the focal adhesion. Its function is as follows. Signaling adapter that couples activated growth factor receptors to signaling pathways. Participates in a signaling cascade initiated by activated KIT and KITLG/SCF. Participates in signaling downstream of the angiopoietin receptor TEK/TIE2, and plays a role in the regulation of endothelial cell migration and sprouting angiogenesis. The protein is SHC-transforming protein 1 (SHC1) of Bos taurus (Bovine).